The chain runs to 385 residues: Chaperone protein DnaJ (385 aa).

The region spanning 3–68 (DYYEILGVTR…QKRAAYDRFG (66 aa)) is the J domain. Residues 135 to 213 (GAEVEITVPA…CHGHGQVRRE (79 aa)) form a CR-type zinc finger. The Zn(2+) site is built by cysteine 148, cysteine 151, cysteine 165, cysteine 168, cysteine 187, cysteine 190, cysteine 201, and cysteine 204. CXXCXGXG motif repeat units follow at residues 148 to 155 (CEVCEGSG), 165 to 172 (CGTCGGAG), 187 to 194 (CPRCGGSG), and 201 to 208 (CSNCHGHG).

This sequence belongs to the DnaJ family. In terms of assembly, homodimer. Requires Zn(2+) as cofactor.

It is found in the cytoplasm. Functionally, participates actively in the response to hyperosmotic and heat shock by preventing the aggregation of stress-denatured proteins and by disaggregating proteins, also in an autonomous, DnaK-independent fashion. Unfolded proteins bind initially to DnaJ; upon interaction with the DnaJ-bound protein, DnaK hydrolyzes its bound ATP, resulting in the formation of a stable complex. GrpE releases ADP from DnaK; ATP binding to DnaK triggers the release of the substrate protein, thus completing the reaction cycle. Several rounds of ATP-dependent interactions between DnaJ, DnaK and GrpE are required for fully efficient folding. Also involved, together with DnaK and GrpE, in the DNA replication of plasmids through activation of initiation proteins. In Caulobacter vibrioides (strain ATCC 19089 / CIP 103742 / CB 15) (Caulobacter crescentus), this protein is Chaperone protein DnaJ.